We begin with the raw amino-acid sequence, 85 residues long: MLKWSTLCFRFVRAMQQALFLTIFFHMQIFCIAFTYNSTFKCSLITTSSLTCYKVLSTLYTQNSSKVYSTESTLYLFLNLSSTGF.

This is an uncharacterized protein from Saimiriine herpesvirus 2 (strain 488) (SaHV-2).